Reading from the N-terminus, the 359-residue chain is N6-succino-2-amino-2'-deoxyadenylate synthase (359 aa).

Catalysis depends on Ser-23, which acts as the Proton acceptor. Ser-23, Thr-24, Gly-25, Lys-26, and Gly-27 together coordinate ATP. Ser-23 contacts dGMP. Ser-23 serves as a coordination point for Mg(2+). Residue Asn-49 coordinates dGMP. Gly-51, His-52, and Thr-53 together coordinate ATP. Residue Gly-51 coordinates Mg(2+). The dGMP site is built by Ser-131, Thr-132, and Arg-146. Gln-190 is an ATP binding site. Thr-205 provides a ligand contact to dGMP. Thr-274 is a binding site for Mg(2+). L-aspartate contacts are provided by Thr-274, Val-275, and Arg-280. ATP contacts are provided by Asn-305 and Gln-308.

This sequence belongs to the Caudovirales PurZ family. The cofactor is Mg(2+).

It carries out the reaction dGMP + L-aspartate + ATP = (2S)-2-amino-2'-deoxyadenylo-succinate + ADP + phosphate + 2 H(+). The protein operates within purine metabolism. In terms of biological role, involved in the synthesis of the atypical nucleotide dZTP (2-amino-2'-deoxyadenosine-5'-triphosphate). Catalyzes the condensation of aspartate with deoxyguanylate into dSMP (N6-succino-2-amino-2'-deoxyadenylate), which undergoes defumarylation and phosphorylation respectively by host PurB and guanylate/nucleoside diphosphate kinases to give dZTP. dZTP is integrated into the viral genome instead of adenine by the viral DNA polymerase. This Z-base probably completely replaces adenosine and forms a triple bond to the opposite T-base. The resulting non-standard viral DNA is called Z-genome. The chemically modified DNA is probably harder for the host bacteria to digest with nucleases or restriction enzymes. The sequence is that of N6-succino-2-amino-2'-deoxyadenylate synthase from Cyanophage S-2L (Cyanobacteria phage S-2L).